The primary structure comprises 160 residues: Small ribosomal subunit protein uS17m (160 aa).

This sequence belongs to the universal ribosomal protein uS17 family. As to quaternary structure, component of the mitochondrial ribosome small subunit (28S) which comprises a 12S rRNA and about 30 distinct proteins.

The protein resides in the mitochondrion. The sequence is that of Small ribosomal subunit protein uS17m (mrps-17) from Caenorhabditis elegans.